A 267-amino-acid chain; its full sequence is NLP effector protein 6 (267 aa).

An N-terminal signal peptide occupies residues 1–35 (MRTTSPYSHCSHVEMNAGAFVTMLLVALSVCVAAA). Asn-114 carries an N-linked (GlcNAc...) asparagine glycan. Positions 117–127 (AIMYAWYFPKR) match the Conserved undecapeptide motif motif. Residues 134–140 (IQRHDWK) carry the Conserved heptapeptide motif motif. Asn-192 carries N-linked (GlcNAc...) asparagine glycosylation.

Belongs to the Necrosis inducing protein (NPP1) family.

The protein resides in the secreted. Probable secreted effector that may act as a pathogen-associated molecular pattern (PAMP) recognized by the plant immune system. The chain is NLP effector protein 6 from Plasmopara viticola (Downy mildew of grapevine).